Consider the following 131-residue polypeptide: Transcription antitermination protein NusB (131 aa).

It belongs to the NusB family.

Involved in transcription antitermination. Required for transcription of ribosomal RNA (rRNA) genes. Binds specifically to the boxA antiterminator sequence of the ribosomal RNA (rrn) operons. The polypeptide is Transcription antitermination protein NusB (Bacillus pumilus (strain SAFR-032)).